The chain runs to 463 residues: UDP-N-acetylmuramoyl-L-alanyl-D-glutamate--2,6-diaminopimelate ligase (463 aa).

Thr-21 provides a ligand contact to UDP-N-acetyl-alpha-D-muramoyl-L-alanyl-D-glutamate. 94 to 100 (GTNGKTT) serves as a coordination point for ATP. Residues 137-138 (TT), Ser-164, Gln-170, and Arg-172 each bind UDP-N-acetyl-alpha-D-muramoyl-L-alanyl-D-glutamate. An N6-carboxylysine modification is found at Lys-204. Residues Arg-358, 382-385 (DNPR), Gly-433, and Glu-437 each bind meso-2,6-diaminopimelate. A Meso-diaminopimelate recognition motif motif is present at residues 382–385 (DNPR).

Belongs to the MurCDEF family. MurE subfamily. Requires Mg(2+) as cofactor. In terms of processing, carboxylation is probably crucial for Mg(2+) binding and, consequently, for the gamma-phosphate positioning of ATP.

It is found in the cytoplasm. It carries out the reaction UDP-N-acetyl-alpha-D-muramoyl-L-alanyl-D-glutamate + meso-2,6-diaminopimelate + ATP = UDP-N-acetyl-alpha-D-muramoyl-L-alanyl-gamma-D-glutamyl-meso-2,6-diaminopimelate + ADP + phosphate + H(+). Its pathway is cell wall biogenesis; peptidoglycan biosynthesis. Catalyzes the addition of meso-diaminopimelic acid to the nucleotide precursor UDP-N-acetylmuramoyl-L-alanyl-D-glutamate (UMAG) in the biosynthesis of bacterial cell-wall peptidoglycan. The polypeptide is UDP-N-acetylmuramoyl-L-alanyl-D-glutamate--2,6-diaminopimelate ligase (Helicobacter hepaticus (strain ATCC 51449 / 3B1)).